A 335-amino-acid chain; its full sequence is Tetraacyldisaccharide 4'-kinase (335 aa).

58-65 (TVGGNGKT) is an ATP binding site.

The protein belongs to the LpxK family.

The catalysed reaction is a lipid A disaccharide + ATP = a lipid IVA + ADP + H(+). Its pathway is glycolipid biosynthesis; lipid IV(A) biosynthesis; lipid IV(A) from (3R)-3-hydroxytetradecanoyl-[acyl-carrier-protein] and UDP-N-acetyl-alpha-D-glucosamine: step 6/6. Transfers the gamma-phosphate of ATP to the 4'-position of a tetraacyldisaccharide 1-phosphate intermediate (termed DS-1-P) to form tetraacyldisaccharide 1,4'-bis-phosphate (lipid IVA). This is Tetraacyldisaccharide 4'-kinase from Dichelobacter nodosus (strain VCS1703A).